The following is a 316-amino-acid chain: uncharacterized protein (316 aa).

To yeast YGR277c.

This is an uncharacterized protein from Schizosaccharomyces pombe (strain 972 / ATCC 24843) (Fission yeast).